A 369-amino-acid polypeptide reads, in one-letter code: Outer membrane porin F (369 aa).

The first 21 residues, 1–21 (MKRNILAVVIPALLVAGTANA), serve as a signal peptide directing secretion. Residues 22–27 (AEIFNK) form a beta stranded membrane-spanning segment. Position 28 (Asp28) is a topological domain, periplasmic. A beta stranded membrane pass occupies residues 29-44 (GNKLDLYGKVDVRHQF). Over 45–55 (ADKRSSEDGDD) the chain is Extracellular. Residues 56 to 68 (SYARIGIKGETQI) form a beta stranded membrane-spanning segment. The Periplasmic segment spans residues 69 to 70 (SD). Residues 71–83 (QLTGFGRWEYNVK) traverse the membrane as a beta stranded segment. The Extracellular portion of the chain corresponds to 84 to 97 (AKGTEAAVAESSTR). A beta stranded membrane pass occupies residues 98-106 (LAFAGLKFA). Residues 107-108 (NY) lie on the Periplasmic side of the membrane. Residues 109-115 (GSLDYGR) form a beta stranded membrane-spanning segment. Residues 116-150 (NYGVNYDVNAWTDVLPIFGGDAMAQTDNFMTGRST) lie on the Extracellular side of the membrane. The chain crosses the membrane as a beta stranded span at residues 151-157 (GLLTYRN). The Periplasmic segment spans residues 158–165 (TDFFGLVD). The beta stranded transmembrane segment at 166-177 (GLNFALQYQGQN) threads the bilayer. Residues 178–193 (SDRTKNKGRDTERSNG) lie on the Extracellular side of the membrane. The beta stranded transmembrane segment at 194–204 (DGYGLSSTYDV) threads the bilayer. The Periplasmic segment spans residues 205–206 (GY). Residues 207-219 (GITVGGSYANSAR) traverse the membrane as a beta stranded segment. Topologically, residues 220 to 234 (TADQKEKVSDAYGKR) are extracellular. Residues 235-246 (AEAWNIGAKYDA) form a beta stranded membrane-spanning segment. Residue Asn247 is a topological domain, periplasmic. Residues 248 to 259 (NVYLAAMYGETR) traverse the membrane as a beta stranded segment. At 260–278 (NMTRYTRTIADTDATLIAN) the chain is on the extracellular side. Residues 279–291 (KTQNIELTAQYLF) form a beta stranded membrane-spanning segment. At 292–294 (SDL) the chain is on the periplasmic side. A beta stranded transmembrane segment spans residues 295 to 308 (GLKPSLAYVQSKGK). The Extracellular portion of the chain corresponds to 309–320 (DLTEGKGFNGDL). A beta stranded membrane pass occupies residues 321-332 (VKYVSVGTYYYF). At 333–334 (NK) the chain is on the periplasmic side. The beta stranded transmembrane segment at 335–344 (NLSTYVDYKI) threads the bilayer. Topologically, residues 345 to 359 (NLLKKDNELGVNARN) are extracellular. A beta stranded transmembrane segment spans residues 360-369 (VFGVGLTYQF).

The protein belongs to the Gram-negative porin family. In terms of assembly, homotrimer.

The protein localises to the cell outer membrane. In terms of biological role, forms pores that allow passive diffusion of small molecules across the outer membrane. This Xenorhabdus nematophila (strain ATCC 19061 / DSM 3370 / CCUG 14189 / LMG 1036 / NCIMB 9965 / AN6) protein is Outer membrane porin F (ompF).